A 178-amino-acid chain; its full sequence is Large ribosomal subunit protein uL6 (178 aa).

It belongs to the universal ribosomal protein uL6 family. Part of the 50S ribosomal subunit.

Its function is as follows. This protein binds to the 23S rRNA, and is important in its secondary structure. It is located near the subunit interface in the base of the L7/L12 stalk, and near the tRNA binding site of the peptidyltransferase center. This is Large ribosomal subunit protein uL6 from Streptococcus pyogenes serotype M3 (strain ATCC BAA-595 / MGAS315).